The chain runs to 385 residues: Mannitol-1-phosphate 5-dehydrogenase (385 aa).

3 to 14 provides a ligand contact to NAD(+); that stretch reads ALQFGAGNIGRG.

This sequence belongs to the mannitol dehydrogenase family.

The enzyme catalyses D-mannitol 1-phosphate + NAD(+) = beta-D-fructose 6-phosphate + NADH + H(+). This Buchnera aphidicola subsp. Acyrthosiphon pisum (strain 5A) protein is Mannitol-1-phosphate 5-dehydrogenase.